Consider the following 607-residue polypeptide: Cytosolic Fe-S cluster assembly factor nar1 (607 aa).

[4Fe-4S] cluster is bound at residue C20. The disordered stretch occupies residues 28–47; it reads PKNESSNSQNPYEVTTEDKV. Over residues 29–40 the composition is skewed to polar residues; that stretch reads KNESSNSQNPYE. [4Fe-4S] cluster-binding residues include C62, C65, C68, C214, and C269. The interval 439–461 is disordered; sequence ARVPAASAGGNRRQPISRNSASA. Residues 452-461 show a composition bias toward polar residues; sequence QPISRNSASA. Residues C475 and C479 each contribute to the [4Fe-4S] cluster site. Positions 494 to 505 are enriched in polar residues; the sequence is ASTSTQSVTAVE. Residues 494–513 form a disordered region; sequence ASTSTQSVTAVENPSKPTPH.

This sequence belongs to the NARF family.

Component of the cytosolic Fe/S protein assembly machinery. Required for maturation of extramitochondrial Fe/S proteins. May play a role in the transfer of pre-assembled Fe/S clusters to target apoproteins. This is Cytosolic Fe-S cluster assembly factor nar1 (nar1) from Aspergillus oryzae (strain ATCC 42149 / RIB 40) (Yellow koji mold).